The chain runs to 221 residues: MALALAALAAVEPACGSRYQQLQNEEESGEPEQAAGDAPPPYSSISAESAAYFDYKDESGFPKPPSYNVATTLPSYDEAERTKAEATIPLVPGRDEDFVGRDDFDDADQLRIGNDGIFMLTFFMAFLFNWIGFFLSFCLTTSAAGRYGAISGFGLSLIKWILIVRFSTYFPGYFDGQYWLWWVFLVLGFLLFLRGFINYAKVRKMPETFSNLPRTRVLFIY.

At A2 the chain carries N-acetylalanine. The segment at 2–41 (ALALAALAAVEPACGSRYQQLQNEEESGEPEQAAGDAPPP) is interaction with UBE2L3. The Cytoplasmic portion of the chain corresponds to 2-116 (ALALAALAAV…ADQLRIGNDG (115 aa)). The disordered stretch occupies residues 18-45 (RYQQLQNEEESGEPEQAAGDAPPPYSSI). 3 consecutive short sequence motifs (PPxY motif) follow at residues 39–42 (PPPY), 64–67 (PPSY), and 74–76 (PSY). Residues 42 to 76 (YSSISAESAAYFDYKDESGFPKPPSYNVATTLPSY) are interaction with ITCH. The helical transmembrane segment at 117–137 (IFMLTFFMAFLFNWIGFFLSF) threads the bilayer. The Extracellular segment spans residues 138–143 (CLTTSA). Residues 144 to 164 (AGRYGAISGFGLSLIKWILIV) traverse the membrane as a helical segment. Over 165 to 172 (RFSTYFPG) the chain is Cytoplasmic. A helical membrane pass occupies residues 173 to 193 (YFDGQYWLWWVFLVLGFLLFL). At 194–221 (RGFINYAKVRKMPETFSNLPRTRVLFIY) the chain is on the extracellular side.

As to quaternary structure, forms heterodimers with NDFIP2. Interacts with several E3 ubiquitin-protein ligases, including ITCH, NEDD4, NEDD4L and WWP2. The interaction with NEDD4, NEDD4L and ITCH leads to relocalization of these proteins to exosomes and eventually to exosomal secretion. Interacts with U2SURP. Interacts with SLC11A2/DMT1. Interacts with PTEN. May interact with phosphorylated EGFR. Interacts with BRAT1. Interacts with KCNH2. Interacts with MAVS. Part of a complex containing ITCH, NDFIP1 and MAP3K7. Interacts (via N-terminus) with UBE2L3; the interaction mediates recruitment of UBE2L3 to ITCH. In terms of processing, ubiquitinated by NEDD4 and ITCH; mono-, di- and polyubiquitinated forms are detected. Ubiquitination regulates its degradation. Undergoes transient tyrosine phosphorylation following EGF stimulation, most probably by catalyzed by SRC. Phosphorylation SRC is enhanced in the presence of NDFIP2 which may act as a scaffold to recruit SRC to NDFIP1. In terms of tissue distribution, widely expressed. Higher levels are detected in cerebellum, pituitary, thalamus, kidney, liver, testis, salivary glands and placenta. Also expressed in fetal brain, kidney and lung.

The protein resides in the endosome membrane. Its subcellular location is the golgi apparatus membrane. It is found in the synapse. The protein localises to the synaptosome. It localises to the cell projection. The protein resides in the dendrite. Its subcellular location is the secreted. Its function is as follows. Activates HECT domain-containing E3 ubiquitin-protein ligases, including NEDD4 and ITCH, and consequently modulates the stability of their targets. As a result, controls many cellular processes. Prevents chronic T-helper cell-mediated inflammation by activating ITCH and thus controlling JUNB degradation. Promotes pancreatic beta cell death through degradation of JUNB and inhibition of the unfolded protein response, leading to reduction of insulin secretion. Restricts the production of pro-inflammatory cytokines in effector Th17 T-cells by promoting ITCH-mediated ubiquitination and degradation of RORC. Together with NDFIP2, limits the cytokine signaling and expansion of effector Th2 T-cells by promoting degradation of JAK1, probably by ITCH- and NEDD4L-mediated ubiquitination. Regulates peripheral T-cell tolerance to self and foreign antigens, forcing the exit of naive CD4+ T-cells from the cell cycle before they become effector T-cells. Negatively regulates RLR-mediated antiviral response by promoting SMURF1-mediated ubiquitination and subsequent degradation of MAVS. Negatively regulates KCNH2 potassium channel activity by decreasing its cell-surface expression and interfering with channel maturation through recruitment of NEDD4L to the Golgi apparatus where it mediates KCNH2 degradation. In cortical neurons, mediates the ubiquitination of the divalent metal transporter SLC11A2/DMT1 by NEDD4L, leading to its down-regulation and protection of the cells from cobalt and iron toxicity. Important for normal development of dendrites and dendritic spines in cortex. Enhances the ubiquitination of BRAT1 mediated by: NEDD4, NEDD4L and ITCH and is required for the nuclear localization of ubiquitinated BRAT1. Enhances the ITCH-mediated ubiquitination of MAP3K7 by recruiting E2 ubiquitin-conjugating enzyme UBE2L3 to ITCH. Modulates EGFR signaling through multiple pathways. In particular, may regulate the ratio of AKT1-to-MAPK8 signaling in response to EGF, acting on AKT1 probably through PTEN destabilization and on MAPK8 through ITCH-dependent MAP2K4 inactivation. As a result, may control cell growth rate. Inhibits cell proliferation by promoting PTEN nuclear localization and changing its signaling specificity. This is NEDD4 family-interacting protein 1 (NDFIP1) from Homo sapiens (Human).